A 318-amino-acid chain; its full sequence is Pantothenate synthetase (318 aa).

Residue 44 to 51 coordinates ATP; it reads MGALHQGH. Catalysis depends on His-51, which acts as the Proton donor. Gln-75 provides a ligand contact to (R)-pantoate. Gln-75 contacts beta-alanine. Position 161-164 (161-164) interacts with ATP; sequence GEKD. Gln-167 serves as a coordination point for (R)-pantoate. ATP is bound by residues Val-190 and 198-201; that span reads LSSR. The interval 295 to 318 is disordered; sequence DGHPNLDSQPEPAGTDPALLPPAR.

This sequence belongs to the pantothenate synthetase family. Homodimer.

Its subcellular location is the cytoplasm. It carries out the reaction (R)-pantoate + beta-alanine + ATP = (R)-pantothenate + AMP + diphosphate + H(+). Its pathway is cofactor biosynthesis; (R)-pantothenate biosynthesis; (R)-pantothenate from (R)-pantoate and beta-alanine: step 1/1. In terms of biological role, catalyzes the condensation of pantoate with beta-alanine in an ATP-dependent reaction via a pantoyl-adenylate intermediate. The protein is Pantothenate synthetase of Nocardia farcinica (strain IFM 10152).